Here is a 456-residue protein sequence, read N- to C-terminus: Bifunctional protein GlmU (456 aa).

The interval 1 to 229 (MLNSAMSVVI…ISETDGVNNR (229 aa)) is pyrophosphorylase. UDP-N-acetyl-alpha-D-glucosamine is bound by residues 11 to 14 (LAAG), Lys25, Gln76, 81 to 82 (GT), 103 to 105 (YGD), Gly140, Glu154, Asn169, and Asn227. Asp105 provides a ligand contact to Mg(2+). Asn227 is a Mg(2+) binding site. The segment at 230 to 250 (LQLSRLERIYQAEQAEKLLLS) is linker. The N-acetyltransferase stretch occupies residues 251–456 (GVMLRDPARF…QGWQRPVKKK (206 aa)). Positions 333 and 351 each coordinate UDP-N-acetyl-alpha-D-glucosamine. His363 functions as the Proton acceptor in the catalytic mechanism. UDP-N-acetyl-alpha-D-glucosamine is bound by residues Tyr366 and Asn377. Residues Ala380, 386-387 (NY), Ser405, Ala423, and Arg440 contribute to the acetyl-CoA site.

This sequence in the N-terminal section; belongs to the N-acetylglucosamine-1-phosphate uridyltransferase family. It in the C-terminal section; belongs to the transferase hexapeptide repeat family. Homotrimer. Mg(2+) serves as cofactor.

It is found in the cytoplasm. The catalysed reaction is alpha-D-glucosamine 1-phosphate + acetyl-CoA = N-acetyl-alpha-D-glucosamine 1-phosphate + CoA + H(+). It catalyses the reaction N-acetyl-alpha-D-glucosamine 1-phosphate + UTP + H(+) = UDP-N-acetyl-alpha-D-glucosamine + diphosphate. It participates in nucleotide-sugar biosynthesis; UDP-N-acetyl-alpha-D-glucosamine biosynthesis; N-acetyl-alpha-D-glucosamine 1-phosphate from alpha-D-glucosamine 6-phosphate (route II): step 2/2. It functions in the pathway nucleotide-sugar biosynthesis; UDP-N-acetyl-alpha-D-glucosamine biosynthesis; UDP-N-acetyl-alpha-D-glucosamine from N-acetyl-alpha-D-glucosamine 1-phosphate: step 1/1. Its pathway is bacterial outer membrane biogenesis; LPS lipid A biosynthesis. Functionally, catalyzes the last two sequential reactions in the de novo biosynthetic pathway for UDP-N-acetylglucosamine (UDP-GlcNAc). The C-terminal domain catalyzes the transfer of acetyl group from acetyl coenzyme A to glucosamine-1-phosphate (GlcN-1-P) to produce N-acetylglucosamine-1-phosphate (GlcNAc-1-P), which is converted into UDP-GlcNAc by the transfer of uridine 5-monophosphate (from uridine 5-triphosphate), a reaction catalyzed by the N-terminal domain. This chain is Bifunctional protein GlmU, found in Salmonella schwarzengrund (strain CVM19633).